Consider the following 188-residue polypeptide: GTP cyclohydrolase 1 (188 aa).

The Zn(2+) site is built by Cys-75, His-78, and Cys-146.

The protein belongs to the GTP cyclohydrolase I family. Toroid-shaped homodecamer, composed of two pentamers of five dimers.

It carries out the reaction GTP + H2O = 7,8-dihydroneopterin 3'-triphosphate + formate + H(+). It functions in the pathway cofactor biosynthesis; 7,8-dihydroneopterin triphosphate biosynthesis; 7,8-dihydroneopterin triphosphate from GTP: step 1/1. The chain is GTP cyclohydrolase 1 from Hahella chejuensis (strain KCTC 2396).